We begin with the raw amino-acid sequence, 82 residues long: Delta-ctenitoxin-Pn2c (82 aa).

The signal sequence occupies residues 1 to 17 (MKVAILFLSILVLAVAS). The propeptide occupies 18-34 (ESIEESRDDFAVEELGR). 5 cysteine pairs are disulfide-bonded: Cys37-Cys51, Cys44-Cys57, Cys48-Cys80, Cys50-Cys65, and Cys59-Cys63.

Expressed by the venom gland.

Its subcellular location is the secreted. Reversible inhibitor of voltage-gated sodium channels (Nav). Delays the fast inactivation kinetics of neuronal-type sodium channels. In vivo, it induces rat penile erection. This effect may be due to the neuronal nitric oxide synthase (NOS1), since one of its selective inhibitor completely abolishes all the toxic effects of the toxin. This toxin also causes scratching, lacrimation, hypersalivation, sweating and agitation followed by spastic paralysis of the anterior and posterior extremities and death at dose levels of 0.24 mg/mouse. It is also insecticidal to the larval and adult forms of the house fly. In Phoneutria nigriventer (Brazilian armed spider), this protein is Delta-ctenitoxin-Pn2c.